A 291-amino-acid chain; its full sequence is Cytochrome c-552 (291 aa).

The first 23 residues, 1–23 (MKKTLMASAVGAVIAFGTHGAMA), serve as a signal peptide directing secretion. Residues C68, C71, H72, C157, C161, and H162 each contribute to the heme c site.

Post-translationally, binds 2 heme c groups per subunit.

The protein resides in the periplasm. In terms of biological role, may play a role in nitrite reduction. Shows peroxidase activity on proteolytic modification. This chain is Cytochrome c-552 (nirB), found in Stutzerimonas stutzeri (Pseudomonas stutzeri).